Consider the following 912-residue polypeptide: Protein SLFN14 (912 aa).

The interval 206–391 (ESTHVEFKRF…KVHKFKEALQ (186 aa)) is required for endoribonuclease activity. Residues 392–571 (RHLFPVTQEE…QMGCEFFNLL (180 aa)) form a required for ribosome binding region. 593–600 (CFPGVRKT) is a binding site for ATP.

This sequence belongs to the Schlafen family. Subgroup III subfamily. In terms of assembly, associates with ribosomes in an ATP-independent manner. Requires Mg(2+) as cofactor. The cofactor is Mn(2+). In terms of tissue distribution, expressed in megakaryocytes and platelets (at protein level). Weakly expressed in melanocytes and malignant melanoma cells.

The protein resides in the nucleus. Shows no ribosome-associated and endoribonuclease activities. Its function is as follows. Displays polysome-associated endoribonuclease activity towards mRNAs and rRNAs. May play a role in RNA surveillance pathways by recognizing stalled ribosomes and triggering endonucleolytic cleavage of aberrant mRNAs. Cleaves different types of rRNAs and mRNAs in a magnesium- and manganese-dependent and ATP-independent manner. Involved in correct maturation of megakaryocytes and especially important for proplatelet extension. This Homo sapiens (Human) protein is Protein SLFN14.